The primary structure comprises 263 residues: Copper homeostasis protein cutC homolog (263 aa).

This sequence belongs to the CutC family.

Involved in copper homeostasis. This is Copper homeostasis protein cutC homolog from Drosophila melanogaster (Fruit fly).